The primary structure comprises 371 residues: Cytochrome b (371 aa).

The next 4 helical transmembrane spans lie at 25–45 (FGSM…FLAV), 69–90 (WMMQ…YIHI), 105–125 (WMSG…GYIL), and 170–190 (FFAL…LHIL). Heme b is bound by residues H75 and H89. H174 and H188 together coordinate heme b. Residue H193 participates in a ubiquinone binding. The next 4 helical transmembrane spans lie at 218 to 238 (YKDL…TFFL), 280 to 300 (LGGA…PFTH), 312 to 332 (MSQL…WAAT), and 339 to 358 (FMMI…ISNP).

The protein belongs to the cytochrome b family. In terms of assembly, the cytochrome bc1 complex contains 3 respiratory subunits (MT-CYB, CYC1 and UQCRFS1), 2 core proteins (UQCRC1 and UQCRC2) and probably 6 low-molecular weight proteins. The cofactor is heme b.

It localises to the mitochondrion inner membrane. Functionally, component of the ubiquinol-cytochrome c reductase complex (complex III or cytochrome b-c1 complex) that is part of the mitochondrial respiratory chain. The b-c1 complex mediates electron transfer from ubiquinol to cytochrome c. Contributes to the generation of a proton gradient across the mitochondrial membrane that is then used for ATP synthesis. The chain is Cytochrome b (MT-CYB) from Casarea dussumieri (Round Island keel-scaled boa).